A 226-amino-acid chain; its full sequence is Peroxynitrite isomerase (226 aa).

The short motif at 21–27 (GSWEGQG) is the GXWXGXG element. Heme b is bound at residue H191. The tract at residues 201–226 (SAAEGRLAPGAERPRGAGGRKQGEQS) is disordered.

Belongs to the nitrobindin family. In terms of assembly, homodimer. It depends on heme b as a cofactor.

The catalysed reaction is peroxynitrite = nitrate. Its pathway is nitrogen metabolism. Heme-binding protein able to scavenge peroxynitrite and to protect free L-tyrosine against peroxynitrite-mediated nitration, by acting as a peroxynitrite isomerase that converts peroxynitrite to nitrate. Therefore, this protein likely plays a role in peroxynitrite sensing and in the detoxification of reactive nitrogen and oxygen species (RNS and ROS, respectively). Is able to bind nitric oxide (NO) in vitro, but may act as a sensor of peroxynitrite levels in vivo. This Micrococcus luteus (strain ATCC 4698 / DSM 20030 / JCM 1464 / CCM 169 / CCUG 5858 / IAM 1056 / NBRC 3333 / NCIMB 9278 / NCTC 2665 / VKM Ac-2230) (Micrococcus lysodeikticus) protein is Peroxynitrite isomerase.